Consider the following 405-residue polypeptide: L-carnitine CoA-transferase (405 aa).

CoA contacts are provided by lysine 97 and arginine 104. Aspartate 169 functions as the Nucleophile in the catalytic mechanism.

This sequence belongs to the CoA-transferase III family. CaiB subfamily. In terms of assembly, homodimer.

It is found in the cytoplasm. The catalysed reaction is crotonobetainyl-CoA + (R)-carnitine = crotonobetaine + (R)-carnitinyl-CoA. It catalyses the reaction 4-(trimethylamino)butanoyl-CoA + (R)-carnitine = (R)-carnitinyl-CoA + 4-(trimethylamino)butanoate. The protein operates within amine and polyamine metabolism; carnitine metabolism. Its function is as follows. Catalyzes the reversible transfer of the CoA moiety from gamma-butyrobetainyl-CoA to L-carnitine to generate L-carnitinyl-CoA and gamma-butyrobetaine. Is also able to catalyze the reversible transfer of the CoA moiety from gamma-butyrobetainyl-CoA or L-carnitinyl-CoA to crotonobetaine to generate crotonobetainyl-CoA. This chain is L-carnitine CoA-transferase, found in Escherichia coli O6:K15:H31 (strain 536 / UPEC).